The chain runs to 468 residues: Adenosylhomocysteinase (468 aa).

Positions 57, 132, and 194 each coordinate substrate. 195-197 (TTT) lines the NAD(+) pocket. The substrate site is built by Lys-224 and Asp-228. NAD(+) is bound by residues Asn-229, 258–263 (GFGDVG), Glu-281, Asn-316, 337–339 (IGH), and Asn-382.

This sequence belongs to the adenosylhomocysteinase family. Requires NAD(+) as cofactor.

The protein localises to the cytoplasm. It carries out the reaction S-adenosyl-L-homocysteine + H2O = L-homocysteine + adenosine. It functions in the pathway amino-acid biosynthesis; L-homocysteine biosynthesis; L-homocysteine from S-adenosyl-L-homocysteine: step 1/1. Functionally, may play a key role in the regulation of the intracellular concentration of adenosylhomocysteine. The chain is Adenosylhomocysteinase from Methylorubrum populi (strain ATCC BAA-705 / NCIMB 13946 / BJ001) (Methylobacterium populi).